We begin with the raw amino-acid sequence, 118 residues long: Fluoride-specific ion channel FluC 1 (118 aa).

The next 2 membrane-spanning stretches (helical) occupy residues 1 to 21 (MIQCILVMLGGGIGAVIRGFV) and 29 to 49 (FNTSLPIPTLLINVVGSFCIG). Na(+)-binding residues include G71 and T74. Residues 95 to 115 (LFILYSILQYGVSFVACLLGY) form a helical membrane-spanning segment.

Belongs to the fluoride channel Fluc/FEX (TC 1.A.43) family.

The protein localises to the cell membrane. The enzyme catalyses fluoride(in) = fluoride(out). With respect to regulation, na(+) is not transported, but it plays an essential structural role and its presence is essential for fluoride channel function. Fluoride-specific ion channel. Important for reducing fluoride concentration in the cell, thus reducing its toxicity. The protein is Fluoride-specific ion channel FluC 1 of Staphylococcus saprophyticus subsp. saprophyticus (strain ATCC 15305 / DSM 20229 / NCIMB 8711 / NCTC 7292 / S-41).